The chain runs to 314 residues: Acetaldehyde dehydrogenase (314 aa).

Residue 15-18 (SGNI) participates in NAD(+) binding. Cysteine 133 acts as the Acyl-thioester intermediate in catalysis. Residues 164-172 (SAGPGTRAN) and asparagine 292 each bind NAD(+).

This sequence belongs to the acetaldehyde dehydrogenase family.

It catalyses the reaction acetaldehyde + NAD(+) + CoA = acetyl-CoA + NADH + H(+). In Paraburkholderia phytofirmans (strain DSM 17436 / LMG 22146 / PsJN) (Burkholderia phytofirmans), this protein is Acetaldehyde dehydrogenase.